We begin with the raw amino-acid sequence, 93 residues long: MAEENVIYVGNKPVTNYVLAVMTQFSEGADEVKLVARGRAISRAVDVAEFIRNNVMPEVEVKDIEIGTEEIETEEGDTISVSTIAITLAKPSE.

The protein belongs to the histone-like Alba family.

Its subcellular location is the cytoplasm. It is found in the chromosome. In terms of biological role, binds double-stranded DNA tightly but without sequence specificity. Involved in DNA compaction. The chain is DNA/RNA-binding protein Alba 2 from Methanopyrus kandleri (strain AV19 / DSM 6324 / JCM 9639 / NBRC 100938).